A 639-amino-acid chain; its full sequence is ADP-ribosylation factor-binding protein GGA1 (639 aa).

Methionine 1 bears the N-acetylmethionine mark. The VHS domain maps to 17–147; the sequence is ATNPLNKELD…MLKKQGIVKS (131 aa). The tract at residues 114–274 is interaction with ARF3; that stretch reads KILELLYSWT…RLASDTEDND (161 aa). One can recognise a GAT domain in the interval 171-299; sequence DEEKSKMLAR…VINLYKQLVR (129 aa). Serine 185 is subject to Phosphoserine. Positions 300–509 are unstructured hinge; sequence GEEVNGDATA…ITVPLESIKP (210 aa). 2 disordered regions span residues 320–421 and 434–492; these read LDLS…SGLD and SLPP…QPVP. Serine 355 carries the phosphoserine; by CK2 modification. The Autoinhibitory motif lies at 358–362; it reads DDELM. Residues 381-390 are compositionally biased toward polar residues; sequence GWNSFQSSDA. Residue serine 418 is modified to Phosphoserine. Low complexity predominate over residues 462-480; that stretch reads SSSCSSPSSSATSLLHTVS. A compositionally biased stretch (pro residues) spans 481–490; sequence PEPPRPPQQP. Residues 510–631 enclose the GAE domain; the sequence is SNILPVTVYD…NEMGDVDQFP (122 aa).

The protein belongs to the GGA protein family. As to quaternary structure, monomer. Interacts with GGA2 and GGA3. Binds to clathrin and activated ARFs, including ARF1, ARF5 and ARF6. Interacts with RABEP1. Interacts with RABGEF1. Interacts with the type-I membrane proteins LRP3, M6PR/CD-MPR and IGF2R/CI-MPR. Interacts (via N-terminal VHS domain) with SORL1/sorLA and SORT1 (via C-terminal cytosolic domain). Interacts with EPN4. Interacts with CCDC91. Interacts with HEATR5B/p200a. Interacts with SYNRG/gamma-synergin. Interacts (via GAE doamin) with NECAP1 and NECAP2. Interacts (via GAE domain) with AFTPH/aftiphilin. Interacts with TSG101 and UBC. Interacts with RNF11. Interacts (via VHS domain) with BACE1 (via DXXLL motif); the interaction highly increases when BACE1 is phosphorylated at 'Ser-498'. Interacts with CNST. Interacts with ADRA2B. Interacts with ARL3; the interaction recruits, in collaboration with RABEP1, PKD1:PKD2 complex to trans-Golgi network and is required for ciliary targeting. Post-translationally, phosphorylated by CK2 and dephosphorylated by PP2A. Phosphorylation of GGA1 allows the internal DXXLL motif to bind the VHS domain and to inhibit the recognition of cargo signals. In terms of processing, ubiquitinated. Ubiquitously expressed.

It localises to the golgi apparatus. The protein resides in the trans-Golgi network membrane. Its subcellular location is the endosome membrane. The protein localises to the early endosome membrane. Functionally, plays a role in protein sorting and trafficking between the trans-Golgi network (TGN) and endosomes. Mediates the ARF-dependent recruitment of clathrin to the TGN and binds ubiquitinated proteins and membrane cargo molecules with a cytosolic acidic cluster-dileucine (DXXLL) motif. Mediates export of the GPCR receptor ADRA2B to the cell surface. Required for targeting PKD1:PKD2 complex from the trans-Golgi network to the cilium membrane. Regulates retrograde transport of proteins such as phosphorylated form of BACE1 from endosomes to the trans-Golgi network. This chain is ADP-ribosylation factor-binding protein GGA1 (GGA1), found in Homo sapiens (Human).